Here is a 1434-residue protein sequence, read N- to C-terminus: Ankyrin and armadillo repeat-containing protein (1434 aa).

The helical transmembrane segment at 309–329 (IRRGIGYLKLICFLIPFLLSL) threads the bilayer. ANK repeat units follow at residues 532-561 (AGYT…KVNQ), 569-598 (QGPT…DYTL), 602-631 (RGWM…SLLE), 638-667 (NQCT…NWRK), and 671-701 (KGNN…ELPV). ARM repeat units lie at residues 732 to 771 (DQYW…NIST), 773 to 812 (KSAV…DIAQ), 814 to 852 (ENKD…VLCI), 855 to 894 (ENNQ…EVGR), 897 to 936 (KEIQ…SLAS), and 1072 to 1112 (PVSQ…CIVL).

As to expression, ubiquitously expressed with highest level in pancreas and lowest in skeletal muscle.

The protein localises to the membrane. In Homo sapiens (Human), this protein is Ankyrin and armadillo repeat-containing protein (ANKAR).